The sequence spans 287 residues: Orotidine 5'-phosphate decarboxylase (287 aa).

Residue Lys-97 is the Proton donor of the active site.

It belongs to the OMP decarboxylase family. Type 2 subfamily.

It carries out the reaction orotidine 5'-phosphate + H(+) = UMP + CO2. The protein operates within pyrimidine metabolism; UMP biosynthesis via de novo pathway; UMP from orotate: step 2/2. This is Orotidine 5'-phosphate decarboxylase from Clostridium perfringens (strain SM101 / Type A).